The primary structure comprises 330 residues: L-lactate dehydrogenase (330 aa).

Residues valine 31, aspartate 52, lysine 57, and 96 to 97 (GA) contribute to the NAD(+) site. Residues glutamine 99, arginine 105, and 137-140 (NPVD) contribute to the substrate site. Residues 135 to 137 (VSN) and serine 160 contribute to the NAD(+) site. A substrate-binding site is contributed by 165-168 (DTAR). Beta-D-fructose 1,6-bisphosphate-binding residues include arginine 170 and histidine 185. The active-site Proton acceptor is histidine 192. Tyrosine 238 carries the phosphotyrosine modification. Residue threonine 247 participates in substrate binding.

It belongs to the LDH/MDH superfamily. LDH family. As to quaternary structure, homotetramer.

It is found in the cytoplasm. It carries out the reaction (S)-lactate + NAD(+) = pyruvate + NADH + H(+). It functions in the pathway fermentation; pyruvate fermentation to lactate; (S)-lactate from pyruvate: step 1/1. Its activity is regulated as follows. Allosterically activated by fructose 1,6-bisphosphate (FBP). In terms of biological role, catalyzes the conversion of lactate to pyruvate. The protein is L-lactate dehydrogenase of Gloeobacter violaceus (strain ATCC 29082 / PCC 7421).